The sequence spans 604 residues: MSWLLGRNRQQPQPDQTAGFSEGGGAADPEGRTAGEKSGDSQLSRAERKAMEAYRFDSSALERAADAAKTLERSKHAREALELSKMQEATRQTEYNTKVKEYEAHIEQAKVEQKRIDHEERRKTLIEETKQQQQRAQYQDQLSRKRYEDQLLQQQRVQEENLRKQEESVQRQEAMRRQTIEHEIEMKEKNRLKLLEHELRAKARVDRENRDINLEKIRLKAQEHRTTVLEGIKTAGTVIGAGAEAMLTDWDKVLTAAGGLSLLALGVYTAKGATGVVSRYVEARIGKPTLVGETSRFAFLDALKNPLHYLKRLRAKPTDALQGVVLNPKLEERLRDIAIATKNTRINKGMYRNVLMHGPPGTGKTMFAKKLAEHSGMDFAIMTGGDVAPMGKEGVTAIHKVFDWSHTSRRGLLLFVDEADAFLRKRSSEKISEDLRAALNAFLYRTSEQNPKFMLVLASNTPEQFDYAINDRLDEMVEFTLPGLEERERLLRLYFDKYVLQPAAAGAKRFKLDTFDYGKTCSKMAALCEGMSGREISKLGVSWQAAVYASEDGLLTEKMVLDRCYSAAQQHKQKMAWLSDQERADHKSITGTAAPPLTLTAKKL.

The disordered stretch occupies residues 1 to 50; sequence MSWLLGRNRQQPQPDQTAGFSEGGGAADPEGRTAGEKSGDSQLSRAERKA. Over residues 8–19 the composition is skewed to polar residues; it reads NRQQPQPDQTAG. Residues 29 to 50 are compositionally biased toward basic and acidic residues; it reads PEGRTAGEKSGDSQLSRAERKA. Positions 62-221 form a coiled coil; sequence ERAADAAKTL…INLEKIRLKA (160 aa). An ATP-binding site is contributed by 358–365; it reads GPPGTGKT.

In terms of assembly, can form homooligomers.

It is found in the mitochondrion inner membrane. Its subcellular location is the mitochondrion matrix. It localises to the mitochondrion nucleoid. Required to maintain the proper number of mitochondria in neurons and muscles. This chain is ATPase family AAA domain-containing protein 3A homolog, found in Drosophila melanogaster (Fruit fly).